The chain runs to 290 residues: ATP synthase gamma chain (290 aa).

The protein belongs to the ATPase gamma chain family. F-type ATPases have 2 components, CF(1) - the catalytic core - and CF(0) - the membrane proton channel. CF(1) has five subunits: alpha(3), beta(3), gamma(1), delta(1), epsilon(1). CF(0) has three main subunits: a, b and c.

It is found in the cell membrane. Functionally, produces ATP from ADP in the presence of a proton gradient across the membrane. The gamma chain is believed to be important in regulating ATPase activity and the flow of protons through the CF(0) complex. This chain is ATP synthase gamma chain, found in Akkermansia muciniphila (strain ATCC BAA-835 / DSM 22959 / JCM 33894 / BCRC 81048 / CCUG 64013 / CIP 107961 / Muc).